Consider the following 534-residue polypeptide: Sodium-dependent lysophosphatidylcholine symporter 1 (534 aa).

The Cytoplasmic segment spans residues 1-39 (MAKGEGAESGSAAGLLPTSILQASERPVQVKKEPKKKQQ). The helical transmembrane segment at 40 to 69 (LSICNKLCYAVGGAPYQLTGCALGFFLQIY) threads the bilayer. Residues 70 to 80 (LLDVAKVEPLP) are Extracellular-facing. Residues 81–101 (ASIILFVGRAWDAFTDPLVGF) form a helical membrane-spanning segment. Residues 102 to 113 (CISKSSWTRLGR) lie on the Cytoplasmic side of the membrane. A helical membrane pass occupies residues 114–133 (LMPWIIFSTPLAIIAYFLIW). The Extracellular segment spans residues 134–148 (FVPDFPSGTESSHGF). A helical transmembrane segment spans residues 149–173 (LWYLLFYCLFETLVTCFHVPYSALT). The Cytoplasmic segment spans residues 174–180 (MFISTEQ). A helical membrane pass occupies residues 181-212 (SERDSATAYRMTVEVLGTVIGTAIQGQIVGQA). Topologically, residues 213–232 (KAPCLQDQNGSVVVSEVANR) are extracellular. Cysteines 216 and 464 form a disulfide. Residues Asn221 and Asn231 are each glycosylated (N-linked (GlcNAc...) asparagine). The helical transmembrane segment at 233–266 (TQSTASLKDTQNAYLLAAGIIASIYVLCAFILIL) threads the bilayer. Residues 267–297 (GVREQRELYESQQAESMPFFQGLRLVMGHGP) are Cytoplasmic-facing. The helical transmembrane segment at 298–324 (YVKLIAGFLFTSLAFMLVEGNFALFCT) threads the bilayer. Residues 325-335 (YTLDFRNEFQN) lie on the Extracellular side of the membrane. A helical membrane pass occupies residues 336-354 (LLLAIMLSATFTIPIWQWF). Residues 355–358 (LTRF) are Cytoplasmic-facing. Residues 359–380 (GKKTAVYIGISSAVPFLILVAL) form a helical membrane-spanning segment. At 381–383 (MER) the chain is on the extracellular side. Residues 384-420 (NLIVTYVVAVAAGVSVAAAFLLPWSMLPDVIDDFHLK) form a helical membrane-spanning segment. Topologically, residues 421–430 (HPHSPGTEPI) are cytoplasmic. Residues 431–457 (FFSFYVFFTKFASGVSLGVSTLSLDFA) traverse the membrane as a helical segment. Topologically, residues 458-469 (NYQRQGCSQPEQ) are extracellular. The chain crosses the membrane as a helical span at residues 470-493 (VKFTLKMLVTMAPIILILLGLLLF). Topologically, residues 494–534 (KLYPIDEEKRRQNKKALQALREEASSSGCSDTDSTELASIL) are cytoplasmic.

The protein belongs to the major facilitator superfamily. Post-translationally, N-glycosylated. In terms of tissue distribution, widely expressed. Exhibits an oscillatory pattern of expression in brown adipose tissue and liver consistent with a circadian rhythm. Enriched in brain micro-vessels, where it is specifically present in endothelium constituting the blood-brain barrier (at protein level).

Its subcellular location is the cell membrane. It localises to the endoplasmic reticulum membrane. The enzyme catalyses a 1-acyl-sn-glycero-3-phosphocholine(in) + Na(+)(in) = a 1-acyl-sn-glycero-3-phosphocholine(out) + Na(+)(out). It carries out the reaction 1-(4Z,7Z,10Z,13Z,16Z,19Z-docosahexaenoyl)-sn-glycero-3-phosphocholine(in) + Na(+)(in) = 1-(4Z,7Z,10Z,13Z,16Z,19Z-docosahexaenoyl)-sn-glycero-3-phosphocholine(out) + Na(+)(out). It catalyses the reaction 1-(9Z-octadecenoyl)-sn-glycero-3-phosphocholine(in) + Na(+)(in) = 1-(9Z-octadecenoyl)-sn-glycero-3-phosphocholine(out) + Na(+)(out). The catalysed reaction is 1-hexadecanoyl-sn-glycero-3-phosphocholine(in) + Na(+)(in) = 1-hexadecanoyl-sn-glycero-3-phosphocholine(out) + Na(+)(out). The enzyme catalyses a 1-acyl-sn-glycero-3-phosphoethanolamine(in) + Na(+)(in) = a 1-acyl-sn-glycero-3-phosphoethanolamine(out) + Na(+)(out). In terms of biological role, sodium-dependent lysophosphatidylcholine (LPC) symporter, which plays an essential role for blood-brain barrier formation and function. Specifically expressed in endothelium of the blood-brain barrier of micro-vessels and transports LPC into the brain. Transport of LPC is essential because it constitutes the major mechanism by which docosahexaenoic acid (DHA), an omega-3 fatty acid that is essential for normal brain growth and cognitive function, enters the brain. Transports LPC carrying long-chain fatty acids such LPC oleate and LPC palmitate with a minimum acyl chain length of 14 carbons. Does not transport docosahexaenoic acid in unesterified fatty acid. Not required for central nervous system vascular morphogenesis. The sequence is that of Sodium-dependent lysophosphatidylcholine symporter 1 from Mus musculus (Mouse).